Here is a 296-residue protein sequence, read N- to C-terminus: Ribonuclease MRP protein subunit POP4 (296 aa).

Disordered stretches follow at residues 29 to 74 (LLQQ…VDPK) and 148 to 173 (SASG…KRLK). Residues 36–56 (KNEKDKKGTSDVDVSMKESHQ) are compositionally biased toward basic and acidic residues. Positions 57–66 (ADSLPTPSKT) are enriched in polar residues. Residues 160-167 (SKRSKSRM) carry the Nuclear localization signal motif. Over residues 163-173 (SKSRMSMKRLK) the composition is skewed to basic residues.

The protein belongs to the eukaryotic/archaeal RNase P protein component 1 family. In terms of assembly, component of nuclear RNase MRP complexes. Several subunits of RNase P are also part of the RNase MRP complex. RNase MRP consists of a catalytic RNA moiety and several protein subunits.

The protein resides in the nucleus. Functionally, component of the MRP ribonuclease complex, which cleaves pre-rRNA sequences. Required for rRNA maturation, including 5.8S rRNA processing. Seems not involved in tRNA maturation. The chain is Ribonuclease MRP protein subunit POP4 from Arabidopsis thaliana (Mouse-ear cress).